Here is a 177-residue protein sequence, read N- to C-terminus: MSRIGKQPVSIPSGVECSIKGQLLSVKGKKGQMTLDLHPFTKITSEDGFLKLNPVVEDRDHWAICGTMRALVHNMVVGVTQGFEKKLLLMGVGYRAQAQGQKLTLVLGFSHPVEYAVPQGITIETPTPTEIIVKGFDKQLVGEVAAKIRAYRPPEPYKGKGVRYAGEYVMIKEAKKK.

It belongs to the universal ribosomal protein uL6 family. As to quaternary structure, part of the 50S ribosomal subunit.

Functionally, this protein binds to the 23S rRNA, and is important in its secondary structure. It is located near the subunit interface in the base of the L7/L12 stalk, and near the tRNA binding site of the peptidyltransferase center. The polypeptide is Large ribosomal subunit protein uL6 (Dichelobacter nodosus (strain VCS1703A)).